Consider the following 177-residue polypeptide: SKP1-like protein 15 (177 aa).

Residues 108 to 167 (ILAANYLNVEGLLGLTCQTVADYIKDKTPEEVRELFNIENDFTHEEEEEAIRKENAWAFE) form an interaction with the F-box domain of F-box proteins region.

It belongs to the SKP1 family. As to quaternary structure, part of a SCF (SKP1-cullin-F-box) protein ligase complex. In terms of tissue distribution, expressed at low levels in seedlings and leaves.

The protein localises to the nucleus. It functions in the pathway protein modification; protein ubiquitination. In terms of biological role, involved in ubiquitination and subsequent proteasomal degradation of target proteins. Together with CUL1, RBX1 and a F-box protein, it forms a SCF E3 ubiquitin ligase complex. The functional specificity of this complex depends on the type of F-box protein. In the SCF complex, it serves as an adapter that links the F-box protein to CUL1. This chain is SKP1-like protein 15 (ASK15), found in Arabidopsis thaliana (Mouse-ear cress).